We begin with the raw amino-acid sequence, 332 residues long: Phenylalanine--tRNA ligase alpha subunit (332 aa).

Residue E254 coordinates Mg(2+).

Belongs to the class-II aminoacyl-tRNA synthetase family. Phe-tRNA synthetase alpha subunit type 1 subfamily. In terms of assembly, tetramer of two alpha and two beta subunits. Requires Mg(2+) as cofactor.

The protein resides in the cytoplasm. The enzyme catalyses tRNA(Phe) + L-phenylalanine + ATP = L-phenylalanyl-tRNA(Phe) + AMP + diphosphate + H(+). The polypeptide is Phenylalanine--tRNA ligase alpha subunit (Hydrogenovibrio crunogenus (strain DSM 25203 / XCL-2) (Thiomicrospira crunogena)).